A 427-amino-acid polypeptide reads, in one-letter code: Septin-8 (427 aa).

In terms of domain architecture, Septin-type G spans 39 to 305 (QGFCFNILCV…ELYRRCKLEE (267 aa)). The interval 49–56 (GETGIGKS) is G1 motif. Residues 49 to 56 (GETGIGKS), glycine 104, 185 to 193 (KADTISKSE), glycine 239, and arginine 254 each bind GTP. Positions 101-104 (DTVG) are G3 motif. The G4 motif stretch occupies residues 184–187 (AKAD). Positions 321–409 (QETYEAKRKE…KAAMEALQSQ (89 aa)) form a coiled coil. Residues 373-427 (RVHQEESKKVEDKRRDLEEEMNSFNRRKAAMEALQSQSFQATSQQPLKKDKDRKN) form a disordered region. Over residues 374–389 (VHQEESKKVEDKRRDL) the composition is skewed to basic and acidic residues. Positions 406–418 (LQSQSFQATSQQP) are enriched in polar residues.

Belongs to the TRAFAC class TrmE-Era-EngA-EngB-Septin-like GTPase superfamily. Septin GTPase family.

The protein resides in the cytoplasm. It localises to the cytoskeleton. The protein localises to the synapse. It is found in the cell projection. Its subcellular location is the axon. The protein resides in the cytoplasmic vesicle. It localises to the secretory vesicle. The protein localises to the synaptic vesicle membrane. It is found in the presynapse. The chain is Septin-8 from Xenopus tropicalis (Western clawed frog).